Consider the following 812-residue polypeptide: Axin-2 (812 aa).

The segment at 1–43 is disordered; sequence MNRTLTDPMVSSFREDDPRPPVPGEEGETTCHHPSKLAMMRPK. The region spanning 84–203 is the RGS domain; the sequence is SLHFLLGDQD…LTSDIYLEYV (120 aa). Disordered regions lie at residues 275-326, 388-430, 446-484, and 609-726; these read SYRR…AIPP, ETMS…TCEE, TPGCQSPGLLRHSPRSRSPEQRPLPRGGLSTRSQSSSMN, and RQTK…SGCH. Positions 285–303 are enriched in polar residues; that stretch reads NRFTSGYSFAPATSANDSE. The span at 305–323 shows a compositional bias: low complexity; that stretch reads SSDALTDDSMSMTDSSVDA. The segment at 329–415 is interaction with GSK3B; it reads LGSKKQLQRE…RDESEMSSSS (87 aa). Residues 388–397 are compositionally biased toward basic and acidic residues; sequence ETMSSLEERL. Acidic residues predominate over residues 401 to 410; that stretch reads QEEEERDESE. The span at 411–421 shows a compositional bias: low complexity; the sequence is MSSSSASHSLP. The tract at residues 415-467 is interaction with beta-catenin; it reads SASHSLPLLPPGTCEEDPQAILDEHLSRVLKTPGCQSPGLLRHSPRSRSPEQR. The span at 475–484 shows a compositional bias: polar residues; it reads STRSQSSSMN. The span at 672–683 shows a compositional bias: basic and acidic residues; it reads EEARRRLEEVSK. Residues 730–812 enclose the DIX domain; sequence GSETVVTYFF…KILGKVDRMD (83 aa).

Interacts with hwa; leading to promote the tankyrase-mediated degradation of axin1. ADP-ribosylated by tankyrase tnks and tnks2. Poly-ADP-ribosylated protein is recognized by rnf146, followed by ubiquitination and subsequent activation of the Wnt signaling pathway. In terms of processing, ubiquitinated by rnf146 when poly-ADP-ribosylated, leading to its degradation and subsequent activation of the Wnt signaling pathway.

It is found in the cytoplasm. Component of the beta-catenin destruction complex required for regulating ctnnb1 levels through phosphorylation and ubiquitination, and modulating Wnt-signaling. Controls dorsoventral patterning by down-regulating ctnnb1 to inhibit the Wnt signaling pathway and ventralize embryos. This chain is Axin-2 (axin2), found in Danio rerio (Zebrafish).